The following is a 149-amino-acid chain: Lipoprotein MlpF (149 aa).

Positions 1–17 (MKIINILFCLFLLLLNS) are cleaved as a signal peptide. Residue Cys18 is the site of N-palmitoyl cysteine attachment. Cys18 is lipidated: S-diacylglycerol cysteine. Positions 26–58 (LKNNAQQTKSRGKRDLTQKEATPEKPKSKEELL) are disordered. The span at 38–58 (KRDLTQKEATPEKPKSKEELL) shows a compositional bias: basic and acidic residues.

Belongs to the Multicopy lipoprotein (Mlp) family.

It localises to the cell outer membrane. An outer membrane protein that may participate in pathogenesis. Some human Lyme disease patients have antibodies against this protein. The Mlp proteins probably undergo intragenic recombination, generating new alleles. The sequence is that of Lipoprotein MlpF from Borreliella burgdorferi (strain ATCC 35210 / DSM 4680 / CIP 102532 / B31) (Borrelia burgdorferi).